The following is a 242-amino-acid chain: MAAATRSCRPWGSLLGLIWLVSAAAASWDLSSLRCNFGSFCECDFQPDFQGLECDLAQHLAGQHLARSLVVKALKAFLQDPAPTKPLVLSLHGWTGTGKSYVSSLLAHYLFRDGLRSPHVHHFSPVIHFPHPSHLERYKKDLKSWVQGNLTVCSRSLFLFDEMDKLAPGLIEVLRPFLGSSWVVYGTNYRKAIFIFIRWLLALGHHGRASPGRSGALPATPAAPRAALCAQRAGPSGPGAQG.

An N-terminal signal peptide occupies residues 1–26 (MAAATRSCRPWGSLLGLIWLVSAAAA). The propeptide occupies 27–189 (SWDLSSLRCN…SSWVVYGTNY (163 aa)). Residue 93–100 (GWTGTGKS) coordinates ATP. Asparagine 149 carries N-linked (GlcNAc...) asparagine glycosylation.

This sequence belongs to the ClpA/ClpB family. Torsin subfamily.

The protein localises to the secreted. Salusin may be a endocrine and/or paracrine factor able to increase intracellular calcium concentrations and induce cell mitogenesis. Salusin may also be a potent hypotensive peptide. The protein is Prosalusin (TOR2A) of Bos taurus (Bovine).